A 37-amino-acid polypeptide reads, in one-letter code: U1-theraphotoxin-Hs1b (37 aa).

3 cysteine pairs are disulfide-bonded: Cys4–Cys18, Cys8–Cys29, and Cys23–Cys34.

As to quaternary structure, form 1 and form 2 may dimerize. Expressed by the venom gland.

It is found in the secreted. Lethal neurotoxin that blocks neuromuscular transmission. Acts cooperatively to potentiate the activity of huwentoxin-I. The polypeptide is U1-theraphotoxin-Hs1b (Cyriopagopus schmidti (Chinese bird spider)).